Consider the following 493-residue polypeptide: Cobyric acid synthase (493 aa).

The region spanning 246–440 is the GATase cobBQ-type domain; sequence PIDIAVIKMP…IHGVFDGVAF (195 aa). Cys326 functions as the Nucleophile in the catalytic mechanism. His432 is a catalytic residue.

This sequence belongs to the CobB/CobQ family. CobQ subfamily.

It functions in the pathway cofactor biosynthesis; adenosylcobalamin biosynthesis. Its function is as follows. Catalyzes amidations at positions B, D, E, and G on adenosylcobyrinic A,C-diamide. NH(2) groups are provided by glutamine, and one molecule of ATP is hydrogenolyzed for each amidation. This Clostridium botulinum (strain Loch Maree / Type A3) protein is Cobyric acid synthase.